The following is a 97-amino-acid chain: Aspartyl/glutamyl-tRNA(Asn/Gln) amidotransferase subunit C (97 aa).

The protein belongs to the GatC family. As to quaternary structure, heterotrimer of A, B and C subunits.

The catalysed reaction is L-glutamyl-tRNA(Gln) + L-glutamine + ATP + H2O = L-glutaminyl-tRNA(Gln) + L-glutamate + ADP + phosphate + H(+). The enzyme catalyses L-aspartyl-tRNA(Asn) + L-glutamine + ATP + H2O = L-asparaginyl-tRNA(Asn) + L-glutamate + ADP + phosphate + 2 H(+). Its function is as follows. Allows the formation of correctly charged Asn-tRNA(Asn) or Gln-tRNA(Gln) through the transamidation of misacylated Asp-tRNA(Asn) or Glu-tRNA(Gln) in organisms which lack either or both of asparaginyl-tRNA or glutaminyl-tRNA synthetases. The reaction takes place in the presence of glutamine and ATP through an activated phospho-Asp-tRNA(Asn) or phospho-Glu-tRNA(Gln). The chain is Aspartyl/glutamyl-tRNA(Asn/Gln) amidotransferase subunit C from Synechococcus sp. (strain JA-2-3B'a(2-13)) (Cyanobacteria bacterium Yellowstone B-Prime).